Reading from the N-terminus, the 538-residue chain is Spindle pole body protein CSA6 (538 aa).

Disordered regions lie at residues 1–31 (MEDS…TSDL) and 57–129 (QNIS…KYQD). Basic and acidic residues-rich tracts occupy residues 18 to 30 (PEIK…KTSD) and 57 to 68 (QNISDSEHDLTP). 2 stretches are compositionally biased toward polar residues: residues 86–96 (KFSSSIPQKPT) and 104–122 (TSPT…SGPN). The stretch at 144–237 (KQEQNLKLEN…RNERDELVKD (94 aa)) forms a coiled coil. Basic and acidic residues predominate over residues 304 to 323 (KKISEPSAAVEKDTTSEDKT). Disordered regions lie at residues 304 to 338 (KKIS…TPRM) and 355 to 458 (SSNN…STKY). 2 stretches are compositionally biased toward polar residues: residues 355–392 (SSNN…SAAY) and 407–425 (TNFY…QSSQ). Residues 426–444 (SDERPETFELPHVAKDHWL) are compositionally biased toward basic and acidic residues. The span at 446-457 (RPTSERSTQSTK) shows a compositional bias: polar residues.

It localises to the cytoplasm. Its subcellular location is the cytoskeleton. It is found in the microtubule organizing center. The protein localises to the spindle pole body. Its function is as follows. Plays a role in mitotic spindle pole body organization, possibly at the point of spindle pole body separation. Required for mitotic exit. This Candida albicans (strain SC5314 / ATCC MYA-2876) (Yeast) protein is Spindle pole body protein CSA6.